A 162-amino-acid chain; its full sequence is Ribosome maturation factor RimP (162 aa).

It belongs to the RimP family.

The protein localises to the cytoplasm. Required for maturation of 30S ribosomal subunits. The chain is Ribosome maturation factor RimP from Syntrophotalea carbinolica (strain DSM 2380 / NBRC 103641 / GraBd1) (Pelobacter carbinolicus).